We begin with the raw amino-acid sequence, 506 residues long: Sucrose transport protein SUT3 (506 aa).

Topologically, residues 1–20 are cytoplasmic; sequence MAVDMELDGGGDGKGKAPPQ. The chain crosses the membrane as a helical span at residues 21 to 41; it reads ISLSGLFLACMVAGGVQYGWA. At 42-54 the chain is on the extracellular side; it reads LQLSLLTPYIQTL. The chain crosses the membrane as a helical span at residues 55-75; that stretch reads GIPHALTSVMWLCGPIAGLIV. At 76–94 the chain is on the cytoplasmic side; that stretch reads QPCVGLYSDKCTSSLGRRR. Residues 95 to 115 traverse the membrane as a helical segment; sequence PFILTGCIIICISVIVIGFSS. At 116 to 135 the chain is on the extracellular side; sequence DIGYALGDATEDCKVYRGPR. A helical transmembrane segment spans residues 136–156; that stretch reads YHAAAAFILGFWLLDFSNNTV. The Cytoplasmic portion of the chain corresponds to 157–171; that stretch reads QGPARALMADLSGRH. The chain crosses the membrane as a helical span at residues 172–192; it reads GPSAANAIFCSWMALGNILGY. The Extracellular portion of the chain corresponds to 193–220; that stretch reads SSGSTNDWHKWFPFLMTRACCEACANLK. The helical transmembrane segment at 221-241 threads the bilayer; it reads AAFLVAVVFLGLSTAVTMVFA. Residues 242 to 275 lie on the Cytoplasmic side of the membrane; that stretch reads REVALDPVAAAKRNEGEASGPLAVFKGMKNLPVG. The helical transmembrane segment at 276-296 threads the bilayer; the sequence is MPSVLIVTGLTWLSWFPFILF. Topologically, residues 297-327 are extracellular; sequence DTDWMGREIYHGRPDGSPAEVTAFQEGVRQG. The chain crosses the membrane as a helical span at residues 328–348; sequence AFGLLLNSIVLGISSFLIEPM. Residues 349 to 355 are Cytoplasmic-facing; that stretch reads CRRLGAR. A helical transmembrane segment spans residues 356–376; the sequence is AVWVMSSAVVCVAMAAVSVLS. At 377–404 the chain is on the extracellular side; the sequence is AWSLGDFGGSVQDAARAPAEEGGVRASA. The chain crosses the membrane as a helical span at residues 405–425; it reads LALFVFLGLPFAVLCSVPFAV. Over 426–441 the chain is Cytoplasmic; that stretch reads TAQLTASRGGGQGLCT. A helical membrane pass occupies residues 442 to 462; that stretch reads GVLNISIVVPQMAIALGAGPW. The Extracellular portion of the chain corresponds to 463–470; the sequence is DELFGEGN. Residues 471-491 form a helical membrane-spanning segment; the sequence is IPAFAMASVFAAAAAAAGVVL. Residues 492–506 are Cytoplasmic-facing; the sequence is LPKVSVRSVSMAGGH.

This sequence belongs to the glycoside-pentoside-hexuronide (GPH) cation symporter transporter (TC 2.A.2.4) family. As to quaternary structure, homodimer.

The protein resides in the cell membrane. It participates in glycan biosynthesis; sucrose metabolism. In terms of biological role, responsible for the transport of sucrose into the cell, with the concomitant uptake of protons (symport system). May also transport other glucosides. This is Sucrose transport protein SUT3 (SUT3) from Oryza sativa subsp. indica (Rice).